The primary structure comprises 69 residues: uncharacterized protein (69 aa).

This is an uncharacterized protein from Mycobacterium bovis (strain ATCC BAA-935 / AF2122/97).